Consider the following 152-residue polypeptide: D-aminoacyl-tRNA deacylase (152 aa).

Positions 137 to 138 (GP) match the Gly-cisPro motif, important for rejection of L-amino acids motif.

It belongs to the DTD family. In terms of assembly, homodimer.

The protein localises to the cytoplasm. It carries out the reaction glycyl-tRNA(Ala) + H2O = tRNA(Ala) + glycine + H(+). The enzyme catalyses a D-aminoacyl-tRNA + H2O = a tRNA + a D-alpha-amino acid + H(+). Functionally, an aminoacyl-tRNA editing enzyme that deacylates mischarged D-aminoacyl-tRNAs. Also deacylates mischarged glycyl-tRNA(Ala), protecting cells against glycine mischarging by AlaRS. Acts via tRNA-based rather than protein-based catalysis; rejects L-amino acids rather than detecting D-amino acids in the active site. By recycling D-aminoacyl-tRNA to D-amino acids and free tRNA molecules, this enzyme counteracts the toxicity associated with the formation of D-aminoacyl-tRNA entities in vivo and helps enforce protein L-homochirality. The polypeptide is D-aminoacyl-tRNA deacylase (Aromatoleum aromaticum (strain DSM 19018 / LMG 30748 / EbN1) (Azoarcus sp. (strain EbN1))).